The sequence spans 90 residues: MKCPSIFLTLLIFVSSCTSILINESSDEQRIYSFSPTTSPFDPRSLNQELKIGRIGYCFDCARACMRRGKYIRTCSFERKLCRCSISDIK.

A signal peptide spans 1–19 (MKCPSIFLTLLIFVSSCTS). Asparagine 23 carries N-linked (GlcNAc...) asparagine glycosylation. Intrachain disulfides connect cysteine 58-cysteine 75, cysteine 61-cysteine 82, and cysteine 65-cysteine 84. Positions 67-87 (RRGKYIRTCSFERKLCRCSIS) are PRK6 binding.

It belongs to the DEFL family. Binds to PRK6 LRRs. Expressed in the pistil. Detected exclusively in the synergid cells.

The protein localises to the secreted. Its function is as follows. Pollen tube attractants guiding pollen tubes to the ovular micropyle. The protein is Protein LURE 1.4 of Arabidopsis thaliana (Mouse-ear cress).